We begin with the raw amino-acid sequence, 128 residues long: Cholecystokinin B (128 aa).

The first 20 residues, 1-20 (MCSGVCICLLLAMLSASSKA), serve as a signal peptide directing secretion. Positions 21–108 (HQATGSLGED…FDQSHRINDR (88 aa)) are excised as a propeptide. The segment at 47 to 67 (YARASSAGQKKSFQRTDGDQR) is disordered. Residue Tyr110 is modified to Sulfotyrosine. Phe116 carries the phenylalanine amide modification. Positions 120–128 (SAEEYEYSS) are excised as a propeptide.

This sequence belongs to the gastrin/cholecystokinin family. In terms of processing, the precursor is cleaved by proteases to produce a number of active cholecystokinins. In terms of tissue distribution, brain and gastrointestinal tract.

Its subcellular location is the secreted. The chain is Cholecystokinin B (cck-b) from Xenopus laevis (African clawed frog).